The sequence spans 90 residues: Protein PRAC2 (90 aa).

In terms of tissue distribution, highly expressed in prostate and testis. Also detected in placenta, muscle, colon, peripheral blood leukocytes and skin.

The protein resides in the nucleus. This Homo sapiens (Human) protein is Protein PRAC2.